The following is a 579-amino-acid chain: Putative diflavin flavoprotein A 2 (579 aa).

Residues 50 to 243 (QNGTTYNSYL…GKIKIIANGH (194 aa)) form a zinc metallo-hydrolase region. The Fe cation site is built by His99, Glu101, Asp103, His166, Asp185, and His243. One can recognise a Flavodoxin-like domain in the interval 272-460 (VGLFYVADYG…MLASWVSQAS (189 aa)). A flavodoxin-reductase-like region spans residues 461-579 (LQPLGFTIAV…VRHRKVGNYY (119 aa)).

It in the N-terminal section; belongs to the zinc metallo-hydrolase group 3 family. This sequence in the C-terminal section; belongs to the flavodoxin reductase family. Fe cation serves as cofactor.

Mediates electron transfer from NADH to oxygen, reducing it to water. This modular protein has 3 redox cofactors, in other organisms the same activity requires 2 or 3 proteins. The protein is Putative diflavin flavoprotein A 2 (dfa2) of Nostoc sp. (strain PCC 7120 / SAG 25.82 / UTEX 2576).